Here is a 932-residue protein sequence, read N- to C-terminus: Adhesion G protein-coupled receptor E2 (932 aa).

An N-terminal signal peptide occupies residues 1–15 (MWGFWLLLFWGFSGT). Residues 16–652 (HRWGMTTLAI…TMEFSLYIIS (637 aa)) are Extracellular-facing. EGF-like domains are found at residues 32-69 (GVNECQDTTTCPAYATCTDTTESYYCTCKQGFLPSNGQ) and 81-119 (DVNECLRSDSPCGSNSVCTNIPGRARCSCLSGFSSSAGG). 11 disulfide bridges follow: cysteine 36/cysteine 48, cysteine 42/cysteine 57, cysteine 85/cysteine 98, cysteine 92/cysteine 107, cysteine 137/cysteine 149, cysteine 143/cysteine 158, cysteine 160/cysteine 171, cysteine 177/cysteine 189, cysteine 183/cysteine 198, cysteine 226/cysteine 239, and cysteine 233/cysteine 248. The 40-residue stretch at 133–172 (DVDECLTIGICPKNSNCSNSVGSYSCTCQSGFVSNGSTCE) folds into the EGF-like 3; calcium-binding domain. 2 N-linked (GlcNAc...) asparagine glycosylation sites follow: asparagine 148 and asparagine 167. Residues 173–210 (DEDECVTRNACPEHATCHNTLGSYYCTCNEGLEFSGGG) form the EGF-like 4; calcium-binding domain. An EGF-like 5; calcium-binding domain is found at 222–260 (DVDECSRNSTLCGPSFICINTLGSYSCSCPAGFSLSTFQ). N-linked (GlcNAc...) asparagine glycosylation is present at asparagine 229. N-linked (GlcNAc...) asparagine glycosylation is found at asparagine 269, asparagine 283, asparagine 309, asparagine 333, asparagine 344, asparagine 363, asparagine 405, asparagine 417, asparagine 474, and asparagine 499. Residues 272-307 (DIDECDDICPSNSSCTNTLGSYFCTCHPGFASSNGQ) enclose the EGF-like 6; calcium-binding domain. Disulfide bonds link cysteine 276–cysteine 286 and cysteine 280–cysteine 295. An EGF-like 7; calcium-binding domain is found at 319 to 354 (DIDECTQDPFRCGRNSSCTNVPGSYNCSCLPDFRMD). Cystine bridges form between cysteine 323–cysteine 336 and cysteine 330–cysteine 345. Positions 482–643 (EYLEIESKVI…AIIMASGELT (162 aa)) constitute a GAIN-B domain. The Cell attachment site motif lies at 507–509 (RGD). Intrachain disulfides connect cysteine 596/cysteine 625 and cysteine 613/cysteine 627. Residues 596–643 (CVSWNTDVEDGRWTPSGCETVEASETHTVCSCNRMTNLAIIMASGELT) are GPS. Residues 653–673 (YVGTVISLVCLALAIATFLLF) traverse the membrane as a helical segment. The Cytoplasmic portion of the chain corresponds to 674–681 (RAVQNHNT). A helical transmembrane segment spans residues 682–702 (YLHLHLCVCLFLAKILFLTGI). The Extracellular portion of the chain corresponds to 703 to 719 (DKTDNQTACAIIAGFLH). Residue asparagine 707 is glycosylated (N-linked (GlcNAc...) asparagine). Residues 720 to 740 (YLFLACFFWMLVEAVMLFLMV) traverse the membrane as a helical segment. Residues 741–756 (RNLKVVNYFSSRNIKM) lie on the Cytoplasmic side of the membrane. A helical transmembrane segment spans residues 757-777 (LHLCAFGYGLPVVVVIISATV). At 778-795 (HPWGYGMHNRCWLNTETG) the chain is on the extracellular side. Residues 796-816 (FIWSFLGPVCMIITINSALLA) traverse the membrane as a helical segment. Topologically, residues 817–849 (WTLWVLRQKLCSVNSEVSKLKDTRLLTFKAIAQ) are cytoplasmic. The helical transmembrane segment at 850–870 (IFILGCSWVLGIFQIGPLASI) threads the bilayer. The Extracellular portion of the chain corresponds to 871–872 (MA). Residues 873–893 (YLFTTINSLQGAFIFLIHCLL) form a helical membrane-spanning segment. The Cytoplasmic segment spans residues 894–932 (NRQVRDEYRKLLTRKTDLSSHSQTSGILLSSMPSTSKTG).

Belongs to the G-protein coupled receptor 2 family. Adhesion G-protein coupled receptor (ADGR) subfamily.

It is found in the cell membrane. Functionally, orphan receptor involved in cell adhesion and probably in cell-cell interactions involved specifically cells of the immune system. May play a role in regulatory T-cells (Treg) development. In Rattus norvegicus (Rat), this protein is Adhesion G protein-coupled receptor E2 (Adgre1).